The sequence spans 139 residues: Two-component response regulator 24 (139 aa).

Positions 19-134 constitute a Response regulatory domain; sequence TALVVDDSFV…KLLSILHKLN (116 aa). D69 carries the post-translational modification 4-aspartylphosphate.

Belongs to the ARR family. Type-A subfamily. Post-translationally, two-component system major event consists of a His-to-Asp phosphorelay between a sensor histidine kinase (HK) and a response regulator (RR). In plants, the His-to-Asp phosphorelay involves an additional intermediate named Histidine-containing phosphotransfer protein (HPt). This multistep phosphorelay consists of a His-Asp-His-Asp sequential transfer of a phosphate group between first a His and an Asp of the HK protein, followed by the transfer to a conserved His of the HPt protein and finally the transfer to an Asp in the receiver domain of the RR protein. Mostly expressed in flowers and siliques, primarily restricted to pollen grains.

It localises to the nucleus. In terms of biological role, functions as a response regulator involved in His-to-Asp phosphorelay signal transduction system. Phosphorylation of the Asp residue in the receiver domain activates the ability of the protein to promote the transcription of target genes. Type-A response regulators seem to act as negative regulators of the cytokinin signaling. In Arabidopsis thaliana (Mouse-ear cress), this protein is Two-component response regulator 24.